We begin with the raw amino-acid sequence, 599 residues long: Laccase-2 (599 aa).

Positions 1–19 are cleaved as a signal peptide; sequence MARSTTSLFALSLVASAFA. Plastocyanin-like domains follow at residues 21–145 and 157–307; these read VVDY…IVIY and VDDE…LVYE. Positions 82, 84, 127, and 129 each coordinate Cu cation. Cysteines 103 and 588 form a disulfide. N-linked (GlcNAc...) asparagine glycosylation is found at Asn207, Asn208, Asn231, Asn397, and Asn443. In terms of domain architecture, Plastocyanin-like 3 spans 450-567; the sequence is DVPTLLKILT…EGFAMVFAEA (118 aa). Residues His497, His500, His502, His549, Cys550, His551, and His555 each contribute to the Cu cation site.

The protein belongs to the multicopper oxidase family. Homodimer. Cu cation serves as cofactor. As to expression, in mycelia, at a lower level than LCC4.

Its subcellular location is the secreted. The catalysed reaction is 4 hydroquinone + O2 = 4 benzosemiquinone + 2 H2O. In terms of biological role, lignin degradation and detoxification of lignin-derived products. The polypeptide is Laccase-2 (LCC2) (Thanatephorus cucumeris (Black scurf of potato)).